The primary structure comprises 501 residues: NAD(P)H-quinone oxidoreductase chain 4, chloroplastic (501 aa).

14 helical membrane passes run phenylalanine 5–leucine 25, isoleucine 38–leucine 58, glycine 85–alanine 105, serine 112–phenylalanine 130, leucine 135–methionine 155, phenylalanine 168–leucine 188, alanine 209–isoleucine 229, histidine 243–valine 263, serine 275–threonine 295, isoleucine 306–aspartate 326, glycine 331–glycine 351, leucine 387–threonine 407, isoleucine 417–methionine 437, and leucine 463–valine 483.

It belongs to the complex I subunit 4 family.

The protein localises to the plastid. It is found in the chloroplast thylakoid membrane. It carries out the reaction a plastoquinone + NADH + (n+1) H(+)(in) = a plastoquinol + NAD(+) + n H(+)(out). The catalysed reaction is a plastoquinone + NADPH + (n+1) H(+)(in) = a plastoquinol + NADP(+) + n H(+)(out). This chain is NAD(P)H-quinone oxidoreductase chain 4, chloroplastic, found in Eucalyptus globulus subsp. globulus (Tasmanian blue gum).